The following is a 416-amino-acid chain: Enterobactin exporter EntS (416 aa).

At 1 to 21 (MNKQSWLLNLSLLKTHPAFRA) the chain is on the cytoplasmic side. The helical transmembrane segment at 22 to 42 (VFLARFISIVSLGLLGVAVPV) threads the bilayer. Residues 43–55 (QIQMMTHSTWQVG) lie on the Periplasmic side of the membrane. A helical transmembrane segment spans residues 56–76 (LSVTLTGGAMFVGLMVGGVLA). Residues 77 to 83 (DRYERKK) are Cytoplasmic-facing. A helical membrane pass occupies residues 84 to 104 (VILLARGTCGIGFIGLCLNAL). Residues 105–109 (LPEPS) are Periplasmic-facing. A helical membrane pass occupies residues 110-130 (LLAIYLLGLWDGFFASLGVTA). Topologically, residues 131 to 156 (LLAATPALVGRENLMQAGAITMLTVR) are cytoplasmic. Residues 157 to 177 (LGSVISPMIGGLLLATGGVAW) traverse the membrane as a helical segment. Position 178 (N178) is a topological domain, periplasmic. Residues 179 to 199 (YGLAAAGTFITLLPLLSLPAL) form a helical membrane-spanning segment. Residues 200-218 (PPPPQPREHPLKSLLAGFR) are Cytoplasmic-facing. A helical membrane pass occupies residues 219–239 (FLLASPLVGGIALLGGLLTMA). Topologically, residues 240 to 256 (SAVRVLYPALADNWQMS) are periplasmic. Residues 257–277 (AAQIGFLYAAIPLGAAIGALT) traverse the membrane as a helical segment. Residues 278–287 (SGKLAHSARP) are Cytoplasmic-facing. The helical transmembrane segment at 288–307 (GLLMLLSTLGSFLAIGLFGL) threads the bilayer. Residues 308-313 (MPMWIL) are Periplasmic-facing. Residues 314 to 336 (GVVCLALFGWLSAVSSLLQYTML) form a helical membrane-spanning segment. The Cytoplasmic portion of the chain corresponds to 337 to 356 (QTQTPEAMLGRINGLWTAQN). A helical transmembrane segment spans residues 357 to 377 (VTGDAIGAALLGGLGAMMTPV). Residue A378 is a topological domain, periplasmic. A helical membrane pass occupies residues 379 to 399 (SASASGFGLLIIGVLLLLVLV). At 400–416 (ELRRFRQTPPQMTASDS) the chain is on the cytoplasmic side.

The protein belongs to the major facilitator superfamily. EntS (TC 2.A.1.38) family.

The protein localises to the cell inner membrane. Its function is as follows. Component of an export pathway for enterobactin. The chain is Enterobactin exporter EntS from Escherichia coli O7:K1 (strain IAI39 / ExPEC).